The primary structure comprises 316 residues: 2-phospho-L-lactate guanylyltransferase (316 aa).

A compositionally biased stretch (low complexity) spans 72–85 (TGVSTEAVSTSTST). Disordered regions lie at residues 72 to 107 (TGVS…PTHT) and 119 to 138 (LRDD…DGDK). The span at 92 to 107 (HNAASDNYVSQSPTHT) shows a compositional bias: polar residues.

It belongs to the CofC family. As to quaternary structure, homodimer.

It catalyses the reaction (2S)-2-phospholactate + GTP + H(+) = (2S)-lactyl-2-diphospho-5'-guanosine + diphosphate. The protein operates within cofactor biosynthesis; coenzyme F420 biosynthesis. Its function is as follows. Guanylyltransferase that catalyzes the activation of (2S)-2-phospholactate (2-PL) as (2S)-lactyl-2-diphospho-5'-guanosine, via the condensation of 2-PL with GTP. It is involved in the biosynthesis of coenzyme F420, a hydride carrier cofactor. This is 2-phospho-L-lactate guanylyltransferase from Haloquadratum walsbyi (strain DSM 16790 / HBSQ001).